Consider the following 232-residue polypeptide: Ribose-5-phosphate isomerase A (232 aa).

Substrate-binding positions include 28-31 (TGST), 83-86 (DGAD), and 96-99 (KGGG). Catalysis depends on Glu-105, which acts as the Proton acceptor. Lys-123 is a substrate binding site.

Belongs to the ribose 5-phosphate isomerase family. As to quaternary structure, homodimer.

It catalyses the reaction aldehydo-D-ribose 5-phosphate = D-ribulose 5-phosphate. It participates in carbohydrate degradation; pentose phosphate pathway; D-ribose 5-phosphate from D-ribulose 5-phosphate (non-oxidative stage): step 1/1. Its function is as follows. Catalyzes the reversible conversion of ribose-5-phosphate to ribulose 5-phosphate. In Rhodopseudomonas palustris (strain BisB18), this protein is Ribose-5-phosphate isomerase A.